We begin with the raw amino-acid sequence, 640 residues long: Sodium-dependent nutrient amino acid transporter 1 (640 aa).

The span at 1-13 (MELKPNGNHNNNN) shows a compositional bias: low complexity. Residues 1–25 (MELKPNGNHNNNNAAEKSEDTEKAK) are disordered. Residues 1–30 (MELKPNGNHNNNNAAEKSEDTEKAKAERTN) lie on the Cytoplasmic side of the membrane. Positions 16-25 (EKSEDTEKAK) are enriched in basic and acidic residues. 3 consecutive transmembrane segments (helical) span residues 31-51 (WGNGLEFLMSCISVSVGLGNV), 64-84 (GAFLIPYIIVLFLIGKPMYYL), and 117-137 (TICIISYYSSLLALTLYYLFV). N-linked (GlcNAc...) asparagine glycans are attached at residues asparagine 174, asparagine 181, and asparagine 197. 9 helical membrane-spanning segments follow: residues 228-248 (PDWKLTLALLASWVVIFLVIM), 257-277 (AAYFLALFPYVVLFVLLIRAV), 306-326 (AVVQCFFSLAVGSGPIIMFAS), 340-360 (IVTTLDTLTSLLGGITIFAIL), 400-420 (LFSVLFFFMLFVLGIGSIVAL), 447-467 (CGFLMGLVYVTPGGQWILTLV), 473-493 (TYVVFILAIFELAGIVWIYGL), 515-535 (CWSFFTPVMMIIIFIYSMVTI), and 551-571 (VAGWLLFGIGAAQFPLWGLWY).

This sequence belongs to the sodium:neurotransmitter symporter (SNF) (TC 2.A.22) family.

The protein resides in the membrane. Unusual broad substrate spectrum amino acid:sodium cotransporter that promotes absorption of the D isomers of essential amino acids. Neutral amino acids are the preferred substrates, especially methionine and phenylalanine. In Drosophila ananassae (Fruit fly), this protein is Sodium-dependent nutrient amino acid transporter 1.